The following is a 488-amino-acid chain: Splicing factor U2AF 65 kDa subunit (488 aa).

2 stretches are compositionally biased toward basic and acidic residues: residues 25–55 (LESLQEDVKPDVKSDLNGNGEEKRDRDDEDR) and 78–129 (DRRD…KYRF). The tract at residues 25-133 (LESLQEDVKP…PKKYRFWDVP (109 aa)) is disordered. RRM domains are found at residues 175 to 257 (RRLY…RPRD), 282 to 359 (NKIF…LACA), and 389 to 479 (EILC…YYDV).

This sequence belongs to the splicing factor SR family. Forms a heterodimer with the U2AF small subunit.

It is found in the nucleus. Its function is as follows. Necessary for the splicing of pre-mRNA. Binds to the polypyrimidine tract of introns early during spliceosome assembly. This Caenorhabditis briggsae protein is Splicing factor U2AF 65 kDa subunit (uaf-1).